The following is a 366-amino-acid chain: Protein FAM110B (366 aa).

Disordered regions lie at residues 127–150 (SSEG…HRDT), 163–182 (KVYP…HVSR), and 214–253 (IPCS…PSLQ). Phosphoserine is present on residues S234 and S297. Positions 313–333 (DCEQSQDSNSDLRNDDSANDR) are disordered. A compositionally biased stretch (basic and acidic residues) spans 322-331 (SDLRNDDSAN).

This sequence belongs to the FAM110 family.

Its subcellular location is the cytoplasm. The protein localises to the cytoskeleton. The protein resides in the microtubule organizing center. It is found in the centrosome. The sequence is that of Protein FAM110B (Fam110b) from Rattus norvegicus (Rat).